Consider the following 463-residue polypeptide: Sodium-coupled neutral amino acid transporter 7 (463 aa).

The residue at position 28 (S28) is a Phosphoserine. A run of 11 helical transmembrane segments spans residues 56–76, 82–102, 130–150, 179–199, 206–226, 240–260, 283–303, 320–340, 372–392, 396–416, and 429–449; these read AVFI…PAAF, VAAG…GLVI, LCEV…LIII, FTIS…KEIG, FLSV…YIWP, ASWM…QCHV, AAMV…FLTF, VAVA…YPIL, VLQT…IPDI, ISVI…LCLI, and ASWW…AFIF.

The protein belongs to the amino acid/polyamine transporter 2 family. Interacts with the mTORC1 complex; this interaction mediates the recruitment of mTORC1 to the lysosome and its subsequent activation. In terms of tissue distribution, highly expressed in the brain, including the hippocampus, especially in the granular layer of dentate gyrus cells and the pyramidal cell layer of the hippocampus, amygdala, thalamus, hypothalamus, in the layer of Purkinje cells in the cerebellum and the layers of cortex. Particularly strong expression in neurons of the ventromedial hypothalamus, basolateral amygdala, ventral tegmental area, and locus coeruleus. Not detected in glial cells, including astrocytes. In addition to brain, also expressed in the spinal cord (at protein level).

It localises to the lysosome membrane. The protein resides in the cell projection. It is found in the axon. The enzyme catalyses L-glutamine(in) + Na(+)(in) = L-glutamine(out) + Na(+)(out). It carries out the reaction L-asparagine(in) + Na(+)(in) = L-asparagine(out) + Na(+)(out). Its function is as follows. Symporter that selectively cotransports sodium ions and amino acids, such as L-glutamine and L-asparagine from the lysosome into the cytoplasm and may participates in mTORC1 activation. The transport activity requires an acidic lysosomal lumen. This is Sodium-coupled neutral amino acid transporter 7 from Mus musculus (Mouse).